We begin with the raw amino-acid sequence, 409 residues long: Odorant receptor 35a (409 aa).

Over 1–35 (MVRYVPRFADGQKVKLAWPLAVFRLNHIFWPLDPS) the chain is Cytoplasmic. Residues 36–56 (TGKWGRYLDKVLAVAMSLVFM) traverse the membrane as a helical segment. Over 57–64 (QHNDAELR) the chain is Extracellular. A helical transmembrane segment spans residues 65 to 85 (YLRFEASNRNLDAFLTGMPTY). The Cytoplasmic segment spans residues 86–139 (LILVEAQFRSLHILLHFEKLQKFLEIFYANIYIDPRKEPEMFRKVDGKMIINRL). A helical transmembrane segment spans residues 140–160 (VSAMYGAVISLYLIAPVFSII). Residue Asn161 is glycosylated (N-linked (GlcNAc...) asparagine). Residues 161–177 (NQSKDFLYSMIFPFDSD) lie on the Extracellular side of the membrane. A helical membrane pass occupies residues 178–198 (PLYIFVPLLLTNVWVGIVIDT). At 199–273 (MMFGETNLLC…QQLEAQYTVR (75 aa)) the chain is on the cytoplasmic side. The chain crosses the membrane as a helical span at residues 274 to 294 (VFIMFAFAAGLLCALSFKAYT). The Extracellular segment spans residues 295–302 (NPMANYIY). The chain crosses the membrane as a helical span at residues 303 to 323 (AIWFGAKTVELLSLGQIGSDL). Residues 324-379 (AFTTDSLSTMYYLTHWEQILQYSTNPSENLRLLKLINLAIEMNSKPFYVTGLKYFR) lie on the Cytoplasmic side of the membrane. Residues 380-400 (VSLQAGLKILQASFSYFTFLT) form a helical membrane-spanning segment. The Extracellular portion of the chain corresponds to 401–409 (SMQRRQMSN).

The protein belongs to the insect chemoreceptor superfamily. Heteromeric odorant receptor channel (TC 1.A.69) family. Or1a subfamily. As to quaternary structure, interacts with Orco. Complexes exist early in the endomembrane system in olfactory sensory neurons (OSNs), coupling these complexes to the conserved ciliary trafficking pathway. Expressed in ac3B olfactory sensory neurons in the antenna.

The protein resides in the cell membrane. Its function is as follows. Odorant receptor which mediates acceptance or avoidance behavior, depending on its substrates. The odorant receptor repertoire encodes a large collection of odor stimuli that vary widely in identity, intensity, and duration. Forms a complex with Orco to form odorant-sensing units, providing sensitive and prolonged odorant signaling and calcium permeability. Involved in the behavioral responses to esters. Involved in the behavioral responses to butanol, pentanol, hexanol, octanol, propyl acetate, and butyl acetate. The polypeptide is Odorant receptor 35a (Or35a) (Drosophila melanogaster (Fruit fly)).